The following is a 204-amino-acid chain: Lipid A acyltransferase PagP (204 aa).

Residues 1–25 (MSYKHLISACIFSSLCLGQVNAVLA) form the signal peptide. Catalysis depends on residues His76, Asp119, and Ser120.

Belongs to the lipid A palmitoyltransferase family. Homodimer.

It localises to the cell outer membrane. It carries out the reaction a lipid A + a 1,2-diacyl-sn-glycero-3-phosphocholine = a hepta-acyl lipid A + a 2-acyl-sn-glycero-3-phosphocholine. The catalysed reaction is a lipid IVA + a 1,2-diacyl-sn-glycero-3-phosphocholine = a lipid IVB + a 2-acyl-sn-glycero-3-phosphocholine. It catalyses the reaction a lipid IIA + a 1,2-diacyl-sn-glycero-3-phosphocholine = a lipid IIB + a 2-acyl-sn-glycero-3-phosphocholine. Functionally, transfers a fatty acid residue from the sn-1 position of a phospholipid to the N-linked hydroxyfatty acid chain on the proximal unit of lipid A or its precursors. This Yersinia enterocolitica serotype O:8 / biotype 1B (strain NCTC 13174 / 8081) protein is Lipid A acyltransferase PagP.